The sequence spans 494 residues: Probable malate:quinone oxidoreductase 3 (494 aa).

This sequence belongs to the MQO family. FAD is required as a cofactor.

The enzyme catalyses (S)-malate + a quinone = a quinol + oxaloacetate. The protein operates within carbohydrate metabolism; tricarboxylic acid cycle; oxaloacetate from (S)-malate (quinone route): step 1/1. The polypeptide is Probable malate:quinone oxidoreductase 3 (Staphylococcus epidermidis (strain ATCC 12228 / FDA PCI 1200)).